An 86-amino-acid chain; its full sequence is uncharacterized protein (86 aa).

This is an uncharacterized protein from Psittacid herpesvirus 1 (isolate Amazon parrot/-/97-0001/1997) (PsHV-1).